Consider the following 309-residue polypeptide: S-antigen protein (309 aa).

The first 23 residues, Met-1 to Gly-23, serve as a signal peptide directing secretion. Positions Gly-52 to Met-309 are disordered. The segment covering Leu-60–Glu-86 has biased composition (acidic residues). Residues Glu-93–Ala-259 show a composition bias toward basic and acidic residues. The tract at residues Ser-97–Lys-256 is 20 X 8 AA approximate tandem repeats of A-[RL]-K-S-D-E-A-E. 2 tandem repeats follow at residues Ser-257–Gly-271 and Ser-272–Gly-286. Positions Ser-257–Gly-286 are 2 X 15 AA tandem repeats of S-E-A-G-T-E-G-P-K-G-T-G-G-P-G. Over residues Gly-263–Gly-289 the composition is skewed to gly residues.

Its subcellular location is the parasitophorous vacuole. In terms of biological role, s antigens are soluble heat-stable proteins present in the sera of some infected individuals. The sequence is that of S-antigen protein from Plasmodium falciparum (isolate NF7 / Ghana).